The chain runs to 114 residues: Non-specific lipid-transfer protein 1 (114 aa).

An N-terminal signal peptide occupies residues 1-23 (MEMVSKIACFVLLCMVVVAPHAE). Disulfide bonds link Cys27–Cys73, Cys37–Cys50, Cys51–Cys96, and Cys71–Cys110.

It belongs to the plant LTP family.

In terms of biological role, plant non-specific lipid-transfer proteins transfer phospholipids as well as galactolipids across membranes. May play a role in wax or cutin deposition in the cell walls of expanding epidermal cells and certain secretory tissues. The sequence is that of Non-specific lipid-transfer protein 1 (LTP1) from Solanum pennellii (Tomato).